Here is a 331-residue protein sequence, read N- to C-terminus: Probable transaldolase (331 aa).

Lys142 serves as the catalytic Schiff-base intermediate with substrate.

The protein belongs to the transaldolase family. Type 1 subfamily. Homodimer.

The protein resides in the cytoplasm. It catalyses the reaction D-sedoheptulose 7-phosphate + D-glyceraldehyde 3-phosphate = D-erythrose 4-phosphate + beta-D-fructose 6-phosphate. It functions in the pathway carbohydrate degradation; pentose phosphate pathway; D-glyceraldehyde 3-phosphate and beta-D-fructose 6-phosphate from D-ribose 5-phosphate and D-xylulose 5-phosphate (non-oxidative stage): step 2/3. Functionally, transaldolase is important for the balance of metabolites in the pentose-phosphate pathway. The sequence is that of Probable transaldolase from Drosophila melanogaster (Fruit fly).